The primary structure comprises 108 residues: VQ motif-containing protein 10 (108 aa).

Residues 29 to 38 carry the VQ motif; sequence FKTVVQELTG. The interval 65–85 is disordered; it reads IGEDTRQLHGGGGGGGRMGTT. Residues 73 to 82 are compositionally biased toward gly residues; that stretch reads HGGGGGGGRM.

Interacts with WRKY25, WRKY26 and WRKY33.

Its subcellular location is the nucleus. In terms of biological role, may modulate WRKY transcription factor activities. In Arabidopsis thaliana (Mouse-ear cress), this protein is VQ motif-containing protein 10.